The following is a 1047-amino-acid chain: Atrial natriuretic peptide receptor 2 (1047 aa).

The first 16 residues, 1–16, serve as a signal peptide directing secretion; that stretch reads MALPSLLLVVAALAGG. Residues 17–458 are Extracellular-facing; sequence VRPPGARNLT…DKTPLSTLAI (442 aa). N-linked (GlcNAc...) asparagine glycans are attached at residues Asn-24 and Asn-35. A disulfide bond links Cys-75 and Cys-101. Asn-161, Asn-195, Asn-244, Asn-277, and Asn-349 each carry an N-linked (GlcNAc...) asparagine glycan. Residues 459–478 form a helical membrane-spanning segment; it reads VALGTGITFIMFGVSSFLIF. The Cytoplasmic segment spans residues 479–1047; sequence RKLMLEKELA…GERKGPAGLL (569 aa). Ser-513 is modified (phosphoserine). The 274-residue stretch at 513 to 786 folds into the Protein kinase domain; it reads SRLTLSLRGS…PDFGQIKGFI (274 aa). Residue Thr-516 is modified to Phosphothreonine. Ser-518, Ser-522, Ser-523, and Ser-526 each carry phosphoserine. At Thr-529 the chain carries Phosphothreonine. Residues 861 to 991 form the Guanylate cyclase domain; that stretch reads TIYFSDIVGF…DTVNTASRME (131 aa).

This sequence belongs to the adenylyl cyclase class-4/guanylyl cyclase family. Post-translationally, phosphorylated. Phosphorylation of the protein kinase-like domain is required for full activation by CNP. In terms of processing, glycosylated.

It localises to the cell membrane. The enzyme catalyses GTP = 3',5'-cyclic GMP + diphosphate. Functionally, receptor for the C-type natriuretic peptide NPPC/CNP hormone. Has guanylate cyclase activity upon binding of its ligand. May play a role in the regulation of skeletal growth. The sequence is that of Atrial natriuretic peptide receptor 2 (NPR2) from Bos taurus (Bovine).